Here is a 517-residue protein sequence, read N- to C-terminus: Ribonuclease Y (517 aa).

Residues 1–21 traverse the membrane as a helical segment; that stretch reads MIEVLIGLGAGVVGVGAGYLY. Residues 207-273 enclose the KH domain; that stretch reads LINVVNIKND…TRVIELLVED (67 aa). The 94-residue stretch at 333–426 folds into the HD domain; the sequence is ALAHSLEVAH…VCAADALSAA (94 aa).

The protein belongs to the RNase Y family.

Its subcellular location is the cell membrane. Functionally, endoribonuclease that initiates mRNA decay. This chain is Ribonuclease Y, found in Campylobacter concisus (strain 13826).